Reading from the N-terminus, the 439-residue chain is Proline--tRNA ligase (439 aa).

It belongs to the class-II aminoacyl-tRNA synthetase family. ProS type 2 subfamily. Homodimer.

It is found in the cytoplasm. It carries out the reaction tRNA(Pro) + L-proline + ATP = L-prolyl-tRNA(Pro) + AMP + diphosphate. In terms of biological role, catalyzes the attachment of proline to tRNA(Pro) in a two-step reaction: proline is first activated by ATP to form Pro-AMP and then transferred to the acceptor end of tRNA(Pro). This is Proline--tRNA ligase from Rhodopseudomonas palustris (strain BisB18).